The primary structure comprises 300 residues: ADP-ribosyl cyclase/cyclic ADP-ribose hydrolase 1 (300 aa).

Topologically, residues methionine 1–arginine 21 are cytoplasmic. Residues alanine 22–valine 42 traverse the membrane as a helical; Signal-anchor for type II membrane protein segment. The Extracellular segment spans residues valine 43–isoleucine 300. Disulfide bonds link cysteine 67–cysteine 82, cysteine 99–cysteine 180, and cysteine 160–cysteine 173. A glycan (N-linked (GlcNAc...) asparagine) is linked at asparagine 100. Cysteine 119 is an active-site residue. N-linked (GlcNAc...) asparagine glycosylation occurs at asparagine 164. Residue cysteine 201 is part of the active site. N-linked (GlcNAc...) asparagine glycans are attached at residues asparagine 209 and asparagine 219. Cystine bridges form between cysteine 254/cysteine 275 and cysteine 287/cysteine 296.

This sequence belongs to the ADP-ribosyl cyclase family. In terms of assembly, homodimer. In terms of tissue distribution, expressed at high levels in pancreas, liver, kidney, brain, testis, ovary, placenta, malignant lymphoma and neuroblastoma.

It is found in the cell surface. Its subcellular location is the membrane. It catalyses the reaction 2'-phospho-cyclic ADP-ribose + nicotinate = nicotinate-adenine dinucleotide phosphate. It carries out the reaction NAD(+) = cyclic ADP-beta-D-ribose + nicotinamide + H(+). The enzyme catalyses NAD(+) + H2O = ADP-D-ribose + nicotinamide + H(+). The catalysed reaction is cyclic ADP-beta-D-ribose + H2O = ADP-D-ribose. It catalyses the reaction NADP(+) = 2'-phospho-cyclic ADP-ribose + nicotinamide. It carries out the reaction nicotinate + NADP(+) = nicotinate-adenine dinucleotide phosphate + nicotinamide. Its activity is regulated as follows. ATP inhibits the cADPR hydrolyzing activity. Functionally, synthesizes cyclic ADP-ribose (cADPR), a second messenger for glucose-induced insulin secretion. Synthesizes the Ca(2+) mobilizer nicotinate-adenine dinucleotide phosphate, NAADP(+), from 2'-phospho-cADPR and nicotinic acid, as well as from NADP(+) and nicotinic acid. At both pH 5.0 and pH 7.4 preferentially transforms 2'-phospho-cADPR into NAADP(+), while preferentially cleaving NADP(+) to cADPR and ADPRP rather than into NADDP(+). Has cADPR hydrolase activity. In Homo sapiens (Human), this protein is ADP-ribosyl cyclase/cyclic ADP-ribose hydrolase 1 (CD38).